We begin with the raw amino-acid sequence, 445 residues long: Xylose isomerase (445 aa).

Residues histidine 107 and aspartate 110 contribute to the active site. Residues glutamate 238, glutamate 274, histidine 277, aspartate 302, aspartate 313, aspartate 315, and aspartate 345 each coordinate Mg(2+).

The protein belongs to the xylose isomerase family. In terms of assembly, homotetramer. The cofactor is Mg(2+).

It is found in the cytoplasm. The enzyme catalyses alpha-D-xylose = alpha-D-xylulofuranose. The chain is Xylose isomerase (xylA) from Priestia megaterium (strain DSM 319 / IMG 1521) (Bacillus megaterium).